Reading from the N-terminus, the 619-residue chain is TOX high mobility group box family member 4 (619 aa).

Disordered regions lie at residues 153-227 (LGLS…QKPV) and 304-337 (DMDP…PPAL). Phosphothreonine is present on T176. Phosphoserine is present on residues S178, S181, and S182. Over residues 183 to 193 (LHEDGVEEFRR) the composition is skewed to basic and acidic residues. Residues 208–218 (KQKAPKKRKKK) are compositionally biased toward basic residues. A Nuclear localization signal motif is present at residues 213-218 (KKRKKK). The HMG box DNA-binding region spans 223-291 (PQKPVSAYAL…EYLKALAAYK (69 aa)). Over residues 307–319 (PAPPSQTPSPPPV) the composition is skewed to pro residues. At T313 the chain carries Phosphothreonine. S315 bears the Phosphoserine mark. The span at 320–337 (AAADPASPAPASTEPPAL) shows a compositional bias: low complexity. R479 is modified (asymmetric dimethylarginine). The disordered stretch occupies residues 507–529 (PPPVESSPEQPVNNSPETHTVEE). Residues 512 to 524 (SSPEQPVNNSPET) are compositionally biased toward low complexity. 5 positions are modified to phosphoserine: S548, S550, S558, S560, and S565.

Component of the PNUTS-PP1 phosphatase complex, composed of PPP1R10/PNUTS, TOX4, WDR82 and PPP1CA or PPP1CB or PPP1CC. Interacts with PPP1R10/PNUTS. Interacts with FOXO1 and CREB1 (increased by cAMP); FOXO1 and CREB1 are required for full induction of TOX4-dependent activity and the interactions are inhibited by insulin.

It is found in the nucleus. It localises to the chromosome. With respect to regulation, in liver, recruited to target gene promoters following treatment with dexamethasone and cAMP. Binding is decreased in presence of insulin. Functionally, transcription factor that modulates cell fate reprogramming from the somatic state to the pluripotent and neuronal fate. In liver, controls the expression of hormone-regulated gluconeogenic genes such as G6PC1 and PCK1. This regulation is independent of the insulin receptor activation. Also acts as a regulatory component of protein phosphatase 1 (PP1) complexes. Component of the PNUTS-PP1 protein phosphatase complex, a PP1 complex that regulates RNA polymerase II transcription pause-release. PNUTS-PP1 also plays a role in the control of chromatin structure and cell cycle progression during the transition from mitosis into interphase. The chain is TOX high mobility group box family member 4 (TOX4) from Bos taurus (Bovine).